Here is a 184-residue protein sequence, read N- to C-terminus: Photosystem I assembly protein Ycf4 (184 aa).

2 helical membrane passes run 22–42 (FCWA…GISS) and 57–77 (ILFF…LFIS).

It belongs to the Ycf4 family.

Its subcellular location is the plastid. The protein localises to the chloroplast thylakoid membrane. Its function is as follows. Seems to be required for the assembly of the photosystem I complex. The sequence is that of Photosystem I assembly protein Ycf4 from Illicium oligandrum (Star anise).